We begin with the raw amino-acid sequence, 557 residues long: Formate--tetrahydrofolate ligase (557 aa).

Residue 67-74 participates in ATP binding; that stretch reads TPAGEGKT.

It belongs to the formate--tetrahydrofolate ligase family.

The enzyme catalyses (6S)-5,6,7,8-tetrahydrofolate + formate + ATP = (6R)-10-formyltetrahydrofolate + ADP + phosphate. It participates in one-carbon metabolism; tetrahydrofolate interconversion. The chain is Formate--tetrahydrofolate ligase from Cereibacter sphaeroides (strain ATCC 17029 / ATH 2.4.9) (Rhodobacter sphaeroides).